The chain runs to 317 residues: tRNA-cytidine(32) 2-sulfurtransferase (317 aa).

The interval 1–29 (MNTANNTLPTAADWAGEDGAPDAADTRKI) is disordered. Residues 65–70 (SGGKDS) carry the PP-loop motif motif. [4Fe-4S] cluster contacts are provided by Cys-140, Cys-143, and Cys-231.

Belongs to the TtcA family. Homodimer. Mg(2+) is required as a cofactor. It depends on [4Fe-4S] cluster as a cofactor.

It localises to the cytoplasm. The enzyme catalyses cytidine(32) in tRNA + S-sulfanyl-L-cysteinyl-[cysteine desulfurase] + AH2 + ATP = 2-thiocytidine(32) in tRNA + L-cysteinyl-[cysteine desulfurase] + A + AMP + diphosphate + H(+). The protein operates within tRNA modification. Functionally, catalyzes the ATP-dependent 2-thiolation of cytidine in position 32 of tRNA, to form 2-thiocytidine (s(2)C32). The sulfur atoms are provided by the cysteine/cysteine desulfurase (IscS) system. In Acidovorax ebreus (strain TPSY) (Diaphorobacter sp. (strain TPSY)), this protein is tRNA-cytidine(32) 2-sulfurtransferase.